The sequence spans 111 residues: UPF0125 protein SO_1475 (111 aa).

The disordered stretch occupies residues 88–111 (VRRRRADKAKDEGRANKVTGGRVS).

This sequence belongs to the UPF0125 (RnfH) family.

In Shewanella oneidensis (strain ATCC 700550 / JCM 31522 / CIP 106686 / LMG 19005 / NCIMB 14063 / MR-1), this protein is UPF0125 protein SO_1475.